The chain runs to 240 residues: Putative truncated effector protein hopW1-2 (240 aa).

A disordered region spans residues 1–32 (MSPAQIIRTSHSFPPSFTGTSSSAENSHAQSP). Positions 9–23 (TSHSFPPSFTGTSSS) are enriched in low complexity.

Belongs to the HopW family.

The sequence is that of Putative truncated effector protein hopW1-2 (hopW1-2) from Pseudomonas syringae pv. maculicola.